The chain runs to 547 residues: MATMVPSVLWPRACWTLLVCCLLTPGVQGQEFLLRVEPQNPVLSAGGSLFVNCSTDCPSSEKIALETSLSKELVASGMGWAAFNLSNVTGNSRILCSVYCNGSQITGSSNITVYRLPERVELAPLPPWQPVGQNFTLRCQVEDGSPRTSLTVVLLRWEEELSRQPAVEEPAEVTATVLASRDDHGAPFSCRTELDMQPQGLGLFVNTSAPRQLRTFVLPVTPPRLVAPRFLEVETSWPVDCTLDGLFPASEAQVYLALGDQMLNATVMNHGDTLTATATATARADQEGAREIVCNVTLGGERREARENLTVFSFLGPIVNLSEPTAHEGSTVTVSCMAGARVQVTLDGVPAAAPGQPAQLQLNATESDDGRSFFCSATLEVDGEFLHRNSSVQLRVLYGPKIDRATCPQHLKWKDKTRHVLQCQARGNPYPELRCLKEGSSREVPVGIPFFVNVTHNGTYQCQASSSRGKYTLVVVMDIEAGSSHFVPVFVAVLLTLGVVTIVLALMYVFREHQRSGSYHVREESTYLPLTSMQPTEAMGEEPSRAE.

A signal peptide spans 1–29; sequence MATMVPSVLWPRACWTLLVCCLLTPGVQG. At 30–485 the chain is on the extracellular side; sequence QEFLLRVEPQ…VMDIEAGSSH (456 aa). Residues 46-103 form the Ig-like C2-type 1 domain; the sequence is GGSLFVNCSTDCPSSEKIALETSLSKELVASGMGWAAFNLSNVTGNSRILCSVYCNGS. 6 N-linked (GlcNAc...) asparagine glycosylation sites follow: asparagine 52, asparagine 84, asparagine 87, asparagine 101, asparagine 110, and asparagine 134. 2 disulfides stabilise this stretch: cysteine 53-cysteine 96 and cysteine 57-cysteine 100. The region spanning 132 to 197 is the Ig-like C2-type 2 domain; sequence GQNFTLRCQV…FSCRTELDMQ (66 aa). Cysteine 139 and cysteine 190 are disulfide-bonded. N-linked (GlcNAc...) asparagine glycans are attached at residues asparagine 206, asparagine 264, asparagine 295, asparagine 308, asparagine 320, asparagine 363, asparagine 389, asparagine 453, and asparagine 457. An Ig-like C2-type 3 domain is found at 234 to 301; that stretch reads ETSWPVDCTL…IVCNVTLGGE (68 aa). A disulfide bridge connects residues cysteine 241 and cysteine 294. The region spanning 329 to 382 is the Ig-like C2-type 4 domain; sequence GSTVTVSCMAGARVQVTLDGVPAAAPGQPAQLQLNATESDDGRSFFCSATLEVD. Cysteine 336 and cysteine 375 form a disulfide bridge. Positions 416-469 constitute an Ig-like C2-type 5 domain; the sequence is KTRHVLQCQARGNPYPELRCLKEGSSREVPVGIPFFVNVTHNGTYQCQASSSRG. A disulfide bridge links cysteine 423 with cysteine 462. A helical membrane pass occupies residues 486–510; the sequence is FVPVFVAVLLTLGVVTIVLALMYVF. At 511 to 547 the chain is on the cytoplasmic side; the sequence is REHQRSGSYHVREESTYLPLTSMQPTEAMGEEPSRAE.

The protein belongs to the immunoglobulin superfamily. ICAM family. In terms of assembly, interacts with moesin/MSN. Post-translationally, upon stimulation by a physiologic stimuli becomes rapidly and transiently phosphorylated on serine residues. In terms of processing, N-glycosylated; glycans consist of a mixture of tri- and tetra-antennary complex-type chains and high-mannose chains. In terms of tissue distribution, leukocytes.

The protein resides in the membrane. Functionally, ICAM proteins are ligands for the leukocyte adhesion protein LFA-1 (integrin alpha-L/beta-2). ICAM3 is also a ligand for integrin alpha-D/beta-2. In association with integrin alpha-L/beta-2, contributes to apoptotic neutrophil phagocytosis by macrophages. The chain is Intercellular adhesion molecule 3 (ICAM3) from Homo sapiens (Human).